The primary structure comprises 54 residues: Conotoxin mr5.4b (54 aa).

Positions 1–14 (ILLLLIASAPSVDA) are cleaved as a signal peptide. Positions 15–40 (QLKTKDDVPLASFHANVKRTLQKLLN) are excised as a propeptide. Glu52 carries the 4-carboxyglutamate modification.

It belongs to the conotoxin T superfamily. Contains 2 disulfide bonds that can be either 'C1-C3, C2-C4' or 'C1-C4, C2-C3', since these disulfide connectivities have been observed for conotoxins with cysteine framework V (for examples, see AC P0DQQ7 and AC P81755). As to expression, expressed by the venom duct.

It is found in the secreted. The sequence is that of Conotoxin mr5.4b from Conus marmoreus (Marble cone).